A 181-amino-acid chain; its full sequence is Inner membrane-spanning protein YciB (181 aa).

5 consecutive transmembrane segments (helical) span residues 10-30, 50-70, 80-100, 120-140, and 148-168; these read LIIF…GALI, MQLI…ALHD, IVYV…KPAI, WAWV…AYHL, and FKVF…GGYI.

Belongs to the YciB family.

The protein localises to the cell inner membrane. Plays a role in cell envelope biogenesis, maintenance of cell envelope integrity and membrane homeostasis. The chain is Inner membrane-spanning protein YciB from Vibrio cholerae serotype O1 (strain ATCC 39315 / El Tor Inaba N16961).